Reading from the N-terminus, the 108-residue chain is Mitochondrial import inner membrane translocase subunit tim-13 (108 aa).

Positions 45-68 match the Twin CX3C motif motif; it reads CTNKCITAPGSSLASGEKQCLQRC. Intrachain disulfides connect Cys-45–Cys-68 and Cys-49–Cys-64. A disordered region spans residues 89–108; the sequence is EEMASSGGMGGGFGQGPSFS. Residues 95–108 are compositionally biased toward gly residues; the sequence is GGMGGGFGQGPSFS.

Belongs to the small Tim family. In terms of assembly, heterohexamer; composed of 3 copies of tim-8/ddp-1 and 3 copies of tin-13/tim-13, named soluble 70 kDa complex. Associates with the TIM22 complex, whose core is composed of tim-22.

The protein localises to the mitochondrion inner membrane. Functionally, mitochondrial intermembrane chaperone that participates in the import and insertion of some multi-pass transmembrane proteins into the mitochondrial inner membrane. Also required for the transfer of beta-barrel precursors from the TOM complex to the sorting and assembly machinery (SAM complex) of the outer membrane. Acts as a chaperone-like protein that protects the hydrophobic precursors from aggregation and guide them through the mitochondrial intermembrane space. The tim-8-tim-13 complex mediates the import of some proteins while the predominant tim-9/tin-9.1-tim-10/tin-10 70 kDa complex mediates the import of much more proteins. The polypeptide is Mitochondrial import inner membrane translocase subunit tim-13 (tin-13) (Caenorhabditis elegans).